Reading from the N-terminus, the 50-residue chain is PsaJ-like protein asl3190 (50 aa).

The helical transmembrane segment at 21–41 (VLAVISISVAFSTWAIFNYIF) threads the bilayer.

Belongs to the PsaJ family.

The protein resides in the cellular thylakoid membrane. This Nostoc sp. (strain PCC 7120 / SAG 25.82 / UTEX 2576) protein is PsaJ-like protein asl3190.